Here is an 89-residue protein sequence, read N- to C-terminus: Small ribosomal subunit protein uS17 (89 aa).

It belongs to the universal ribosomal protein uS17 family. As to quaternary structure, part of the 30S ribosomal subunit.

Functionally, one of the primary rRNA binding proteins, it binds specifically to the 5'-end of 16S ribosomal RNA. The protein is Small ribosomal subunit protein uS17 of Xylella fastidiosa (strain Temecula1 / ATCC 700964).